A 72-amino-acid polypeptide reads, in one-letter code: Translation initiation factor IF-1 (72 aa).

Positions 1–72 (MAKEDSIRMQ…NKGRIVYRER (72 aa)) constitute an S1-like domain.

The protein belongs to the IF-1 family. In terms of assembly, component of the 30S ribosomal translation pre-initiation complex which assembles on the 30S ribosome in the order IF-2 and IF-3, IF-1 and N-formylmethionyl-tRNA(fMet); mRNA recruitment can occur at any time during PIC assembly.

It localises to the cytoplasm. Its function is as follows. One of the essential components for the initiation of protein synthesis. Stabilizes the binding of IF-2 and IF-3 on the 30S subunit to which N-formylmethionyl-tRNA(fMet) subsequently binds. Helps modulate mRNA selection, yielding the 30S pre-initiation complex (PIC). Upon addition of the 50S ribosomal subunit IF-1, IF-2 and IF-3 are released leaving the mature 70S translation initiation complex. The sequence is that of Translation initiation factor IF-1 from Halorhodospira halophila (strain DSM 244 / SL1) (Ectothiorhodospira halophila (strain DSM 244 / SL1)).